Here is a 196-residue protein sequence, read N- to C-terminus: Lipoprotein signal peptidase (196 aa).

3 consecutive transmembrane segments (helical) span residues 43–63, 75–95, and 97–117; these read LMLK…GISF, AIFL…MICS, and TIGS…NLID. Catalysis depends on residues aspartate 126 and aspartate 144. Residues 135-155 traverse the membrane as a helical segment; sequence YSFPVFNLADCFITLGVIILI.

The protein belongs to the peptidase A8 family.

It localises to the cell inner membrane. The enzyme catalyses Release of signal peptides from bacterial membrane prolipoproteins. Hydrolyzes -Xaa-Yaa-Zaa-|-(S,diacylglyceryl)Cys-, in which Xaa is hydrophobic (preferably Leu), and Yaa (Ala or Ser) and Zaa (Gly or Ala) have small, neutral side chains.. It functions in the pathway protein modification; lipoprotein biosynthesis (signal peptide cleavage). Functionally, this protein specifically catalyzes the removal of signal peptides from prolipoproteins. The sequence is that of Lipoprotein signal peptidase from Rickettsia typhi (strain ATCC VR-144 / Wilmington).